Consider the following 295-residue polypeptide: Protein SCO1, mitochondrial (295 aa).

The helical transmembrane segment at 76 to 92 threads the bilayer; sequence AIALFLAVGGALSYFFN. Cysteine 148, cysteine 152, and histidine 239 together coordinate Cu cation.

The protein belongs to the SCO1/2 family.

It is found in the mitochondrion inner membrane. Functionally, required for the accumulation of subunits 1 and 2 of cytochrome c oxidase complex. Thought to play a role in either mitochondrial copper transport or insertion of copper into the active site of COX. The sequence is that of Protein SCO1, mitochondrial (SCO1) from Saccharomyces cerevisiae (strain ATCC 204508 / S288c) (Baker's yeast).